Reading from the N-terminus, the 99-residue chain is Large ribosomal subunit protein bL21 (99 aa).

It belongs to the bacterial ribosomal protein bL21 family. Part of the 50S ribosomal subunit. Contacts protein L20.

Functionally, this protein binds to 23S rRNA in the presence of protein L20. In Neorickettsia sennetsu (strain ATCC VR-367 / Miyayama) (Ehrlichia sennetsu), this protein is Large ribosomal subunit protein bL21.